A 173-amino-acid polypeptide reads, in one-letter code: MAENNGNGSTGAADTGQRQRFQIAKMYLRDVSFEAPGAPEAFRDEWKPQMDVELGTRHQPLGENTYDVVLTITVTARNNERTAYLCEVKQGGVFRLEGFPEADMERVLGAYCPAQLFPFAREAINDLVVKGGFPQLLLAPVNFESLYQQQKQRREQGTSDSAPSGSPDNGGRQ.

Positions 148–173 are disordered; that stretch reads QQQKQRREQGTSDSAPSGSPDNGGRQ. Polar residues predominate over residues 158-167; sequence TSDSAPSGSP.

The protein belongs to the SecB family. As to quaternary structure, homotetramer, a dimer of dimers. One homotetramer interacts with 1 SecA dimer.

The protein localises to the cytoplasm. One of the proteins required for the normal export of preproteins out of the cell cytoplasm. It is a molecular chaperone that binds to a subset of precursor proteins, maintaining them in a translocation-competent state. It also specifically binds to its receptor SecA. The polypeptide is Protein-export protein SecB (Halorhodospira halophila (strain DSM 244 / SL1) (Ectothiorhodospira halophila (strain DSM 244 / SL1))).